Consider the following 418-residue polypeptide: AP-3 complex subunit mu-2 (418 aa).

The MHD domain maps to 176 to 417 (NNEAYFDVVE…MTKAGKFQVR (242 aa)).

It belongs to the adaptor complexes medium subunit family. In terms of assembly, adaptor protein complex 3 (AP-3) is a heterotetramer composed of two large adaptins (delta-type subunit AP3D1 and beta-type subunit AP3B1 or AP3B2), a medium adaptin (mu-type subunit AP3M1 or AP3M2) and a small adaptin (sigma-type subunit APS1 or AP3S2). AP-3 associates with the BLOC-1 complex.

It is found in the golgi apparatus. The protein resides in the cytoplasmic vesicle membrane. Component of the adaptor complexes which link clathrin to receptors in coated vesicles. Clathrin-associated protein complexes are believed to interact with the cytoplasmic tails of membrane proteins, leading to their selection and concentration. Ap47 is a subunit of the plasma membrane adaptor. In concert with the BLOC-1 complex, AP-3 is required to target cargos into vesicles assembled at cell bodies for delivery into neurites and nerve terminals. This chain is AP-3 complex subunit mu-2 (Ap3m2), found in Rattus norvegicus (Rat).